A 206-amino-acid chain; its full sequence is MTYSTESLAQSDIWPATADVSTLRRKLLDLLCQLAYKEGDFVLSSGQPSSYYINGKQVTLHPQGALAIGRILLSLLPSDTQAVAGLTLGADPIVTAVSVVSAYENRPIPALIIRKEAKGHGTKAYIEGPNLPEGAKVVVLEDVVTTGQSAMKAVDRLRAAGYVVDEVISLVDRQQGGAEFYQSVGLKFEAVFTIMDLQQRYQELGN.

Residues Arg-114, Lys-115, Lys-118, His-120, and 141–149 contribute to the 5-phospho-alpha-D-ribose 1-diphosphate site; that span reads EDVVTTGQS. Orotate is bound by residues Thr-145 and Arg-173.

The protein belongs to the purine/pyrimidine phosphoribosyltransferase family. PyrE subfamily. In terms of assembly, homodimer. Requires Mg(2+) as cofactor.

It catalyses the reaction orotidine 5'-phosphate + diphosphate = orotate + 5-phospho-alpha-D-ribose 1-diphosphate. Its pathway is pyrimidine metabolism; UMP biosynthesis via de novo pathway; UMP from orotate: step 1/2. Catalyzes the transfer of a ribosyl phosphate group from 5-phosphoribose 1-diphosphate to orotate, leading to the formation of orotidine monophosphate (OMP). The protein is Orotate phosphoribosyltransferase of Nostoc sp. (strain PCC 7120 / SAG 25.82 / UTEX 2576).